The chain runs to 308 residues: Very-long-chain enoyl-CoA reductase (308 aa).

Over 1–86 (MKHYEVEILD…YFRDLGAQIS (86 aa)) the chain is Cytoplasmic. The residue at position 22 (Lys22) is an N6-acetyllysine. A Phosphoserine modification is found at Ser58. Position 60 is an N6-acetyllysine (Lys60). Residues 87 to 106 (WVTVFLTEYAGPLFIYLLFY) traverse the membrane as a helical segment. Residues 107 to 124 (FRVPFIYGHKYDFTSSRH) are Lumenal-facing. A helical membrane pass occupies residues 125–147 (TVVHLACICHSFHYIKRLLETLF). The Cytoplasmic segment spans residues 148–158 (VHRFSHGTMPL). A helical transmembrane segment spans residues 159 to 180 (RNIFKNCTYYWGFAAWMAYYIN). The Lumenal segment spans residues 181–189 (HPLYTPPTY). Residues 190–216 (GAQQVKLALAIFVICQLGNFSIHMALR) form a helical membrane-spanning segment. Topologically, residues 217–245 (DLRPAGSKTRKIPYPTKNPFTWLFLLVSC) are cytoplasmic. The helical transmembrane segment at 246–262 (PNYTYEVGSWIGFAIMT) threads the bilayer. At 263 to 264 (QC) the chain is on the lumenal side. Residues 265 to 292 (LPVALFSLVGFTQMTIWAKGKHRSYLKE) form a helical membrane-spanning segment. The Cytoplasmic portion of the chain corresponds to 293 to 308 (FRDYPPLRMPIIPFLL).

It belongs to the steroid 5-alpha reductase family. In terms of assembly, interacts with ELOVL1 and LASS2. Interacts with HACD1 and HACD2 (via the third lumenal loop), but not with HACD3 and HACD4. Interacts with ELOVL1, ELOVL2, ELOVL3, ELOVL5 and ELOVL7 in the presence of acyl-CoA; interaction with HACD1/2 and that with ELOVLs are mutually exclusive. Post-translationally, glycosylated. In terms of tissue distribution, expressed in most tissues tested. Highly expressed in skeletal muscle.

The protein resides in the endoplasmic reticulum membrane. The enzyme catalyses a very-long-chain 2,3-saturated fatty acyl-CoA + NADP(+) = a very-long-chain (2E)-enoyl-CoA + NADPH + H(+). It carries out the reaction octadecanoyl-CoA + NADP(+) = (2E)-octadecenoyl-CoA + NADPH + H(+). The catalysed reaction is (2E,7Z,10Z,13Z,16Z)-docosapentaenoyl-CoA + NADPH + H(+) = (7Z,10Z,13Z,16Z)-docosatetraenoyl-CoA + NADP(+). It catalyses the reaction (2E,7Z,10Z,13Z,16Z,19Z)-docosahexaenoyl-CoA + NADPH + H(+) = (7Z,10Z,13Z,16Z,19Z)-docosapentaenoyl-CoA + NADP(+). The enzyme catalyses (2E,8Z,11Z,14Z)-eicosatetraenoyl-CoA + NADPH + H(+) = (8Z,11Z,14Z)-eicosatrienoyl-CoA + NADP(+). It carries out the reaction (2E)-hexadecenoyl-CoA + NADPH + H(+) = hexadecanoyl-CoA + NADP(+). It functions in the pathway lipid metabolism; fatty acid biosynthesis. Its pathway is lipid metabolism; sphingolipid metabolism. Its function is as follows. Involved in both the production of very long-chain fatty acids for sphingolipid synthesis and the degradation of the sphingosine moiety in sphingolipids through the sphingosine 1-phosphate metabolic pathway. Catalyzes the last of the four reactions of the long-chain fatty acids elongation cycle. This endoplasmic reticulum-bound enzymatic process, allows the addition of 2 carbons to the chain of long- and very long-chain fatty acids/VLCFAs per cycle. This enzyme reduces the trans-2,3-enoyl-CoA fatty acid intermediate to an acyl-CoA that can be further elongated by entering a new cycle of elongation. Thereby, it participates in the production of VLCFAs of different chain lengths that are involved in multiple biological processes as precursors of membrane lipids and lipid mediators. Catalyzes the saturation step of the sphingosine 1-phosphate metabolic pathway, the conversion of trans-2-hexadecenoyl-CoA to palmitoyl-CoA. The protein is Very-long-chain enoyl-CoA reductase (TECR) of Homo sapiens (Human).